The following is a 197-amino-acid chain: Imidazoleglycerol-phosphate dehydratase (197 aa).

This sequence belongs to the imidazoleglycerol-phosphate dehydratase family.

The protein resides in the cytoplasm. The catalysed reaction is D-erythro-1-(imidazol-4-yl)glycerol 3-phosphate = 3-(imidazol-4-yl)-2-oxopropyl phosphate + H2O. The protein operates within amino-acid biosynthesis; L-histidine biosynthesis; L-histidine from 5-phospho-alpha-D-ribose 1-diphosphate: step 6/9. The sequence is that of Imidazoleglycerol-phosphate dehydratase from Syntrophus aciditrophicus (strain SB).